A 62-amino-acid chain; its full sequence is UPF0337 protein mll8179 (62 aa).

The disordered stretch occupies residues 1 to 42 (MRNMVNKDQVAGLAKQLKGSVKQAAGKATGNRRTQAEGMADK).

This sequence belongs to the UPF0337 (CsbD) family.

The protein is UPF0337 protein mll8179 of Mesorhizobium japonicum (strain LMG 29417 / CECT 9101 / MAFF 303099) (Mesorhizobium loti (strain MAFF 303099)).